The sequence spans 138 residues: Transcription antitermination protein NusB (138 aa).

It belongs to the NusB family.

Functionally, involved in transcription antitermination. Required for transcription of ribosomal RNA (rRNA) genes. Binds specifically to the boxA antiterminator sequence of the ribosomal RNA (rrn) operons. The chain is Transcription antitermination protein NusB from Helicobacter pylori (strain J99 / ATCC 700824) (Campylobacter pylori J99).